The sequence spans 112 residues: Large ribosomal subunit protein uL18 (112 aa).

Belongs to the universal ribosomal protein uL18 family. In terms of assembly, part of the 50S ribosomal subunit; part of the 5S rRNA/L5/L18/L25 subcomplex. Contacts the 5S and 23S rRNAs.

This is one of the proteins that bind and probably mediate the attachment of the 5S RNA into the large ribosomal subunit, where it forms part of the central protuberance. This is Large ribosomal subunit protein uL18 from Thermus thermophilus (strain ATCC BAA-163 / DSM 7039 / HB27).